The sequence spans 397 residues: Lysophospholipid transporter LplT (397 aa).

Residues 1–17 lie on the Periplasmic side of the membrane; sequence MSESVHTNTSLWSKGMK. Residues 18–38 traverse the membrane as a helical segment; it reads AVIVAQFLSAFGDNALLFATL. Residues 39 to 52 are Cytoplasmic-facing; that stretch reads ALLNAQFYPEWSQP. The helical transmembrane segment at 53–73 threads the bilayer; the sequence is ILQMVFVGAYILFAPFVGQVA. Topologically, residues 74–90 are periplasmic; that stretch reads DSFAKGRVMMFANGLKL. Residues 91–111 traverse the membrane as a helical segment; the sequence is LGAASICFGINPFLGYTLVGV. Topologically, residues 112-144 are cytoplasmic; it reads GAAAYSPAKYGILGELTTGSKLVKANGLMEAST. The chain crosses the membrane as a helical span at residues 145 to 165; it reads IAAILLGSVAGGVLADWHVLV. Position 166 (A166) is a topological domain, periplasmic. Residues 167-187 form a helical membrane-spanning segment; that stretch reads LAACALAYGGAVVANIYIPKL. At 188–226 the chain is on the cytoplasmic side; it reads AAARPGQSWNLINMTRSFLNACTSLWRNGETRFSLVGTS. The helical transmembrane segment at 227–247 threads the bilayer; sequence LFWGAGVTLRFLLVLWVPVAL. The Periplasmic segment spans residues 248–256; that stretch reads GITDNATPT. Residues 257–277 traverse the membrane as a helical segment; sequence YLNAMVAIGIVVGAGAAAKLV. Residues 278 to 280 are Cytoplasmic-facing; sequence TLE. The helical transmembrane segment at 281-301 threads the bilayer; that stretch reads TVSRCMPAGILIGVVVLIFSL. Residues 302–304 lie on the Periplasmic side of the membrane; it reads QHE. The helical transmembrane segment at 305–325 threads the bilayer; that stretch reads LLPAYALLMLIGVMGGFFVVP. Residues 326 to 343 lie on the Cytoplasmic side of the membrane; that stretch reads LNALLQERGKKSVGAGNA. A helical transmembrane segment spans residues 344-364; sequence IAVQNLGENSAMLLMLGIYSL. The Periplasmic segment spans residues 365 to 366; that stretch reads AV. A helical membrane pass occupies residues 367–387; that stretch reads MIGIPVVPIGIGFGALFALAI. Residues 388–397 are Cytoplasmic-facing; the sequence is TALWIWQRRH.

This sequence belongs to the major facilitator superfamily. LplT (TC 2.A.1.42) family.

Its subcellular location is the cell inner membrane. Its function is as follows. Catalyzes the facilitated diffusion of 2-acyl-glycero-3-phosphoethanolamine (2-acyl-GPE) into the cell. This chain is Lysophospholipid transporter LplT, found in Escherichia coli (strain SE11).